The primary structure comprises 147 residues: Interleukin-4 (147 aa).

Residues 1 to 24 (MGLSPHLAVTLFCFLICTGNGIHG) form the signal peptide. Cys-47 and Cys-87 form a disulfide bridge. Residues Asn-61, Asn-90, and Asn-117 are each glycosylated (N-linked (GlcNAc...) asparagine).

This sequence belongs to the IL-4/IL-13 family.

The protein localises to the secreted. Its function is as follows. Participates in at least several B-cell activation processes as well as of other cell types. It is a costimulator of DNA-synthesis. It induces the expression of class II MHC molecules on resting B-cells. It enhances both secretion and cell surface expression of IgE and IgG1. It also regulates the expression of the low affinity Fc receptor for IgE (CD23) on both lymphocytes and monocytes. Positively regulates IL31RA expression in macrophages. Stimulates autophagy in dendritic cells by interfering with mTORC1 signaling and through the induction of RUFY4. The protein is Interleukin-4 (Il4) of Rattus norvegicus (Rat).